We begin with the raw amino-acid sequence, 445 residues long: Exodeoxyribonuclease 7 large subunit (445 aa).

Belongs to the XseA family. As to quaternary structure, heterooligomer composed of large and small subunits.

It is found in the cytoplasm. It catalyses the reaction Exonucleolytic cleavage in either 5'- to 3'- or 3'- to 5'-direction to yield nucleoside 5'-phosphates.. Functionally, bidirectionally degrades single-stranded DNA into large acid-insoluble oligonucleotides, which are then degraded further into small acid-soluble oligonucleotides. The polypeptide is Exodeoxyribonuclease 7 large subunit (Staphylococcus aureus (strain JH1)).